Reading from the N-terminus, the 188-residue chain is MPVADTSQLISGVAERYASSLFELALEAGSIEAVGADLTRIQALIDGSADLKRLIVSPVFSADDQYKAISALVEKFGVSGLVGNFLKVVARNRRLFVLPGIIRAFRLLAARHKGEITADVTSAHALTPAQETELKAALKGVTGKDVAVNVTVDPSILGGLIVKVGSRQIDTSLRTKLSTLKLALKEVG.

This sequence belongs to the ATPase delta chain family. F-type ATPases have 2 components, F(1) - the catalytic core - and F(0) - the membrane proton channel. F(1) has five subunits: alpha(3), beta(3), gamma(1), delta(1), epsilon(1). F(0) has three main subunits: a(1), b(2) and c(10-14). The alpha and beta chains form an alternating ring which encloses part of the gamma chain. F(1) is attached to F(0) by a central stalk formed by the gamma and epsilon chains, while a peripheral stalk is formed by the delta and b chains.

The protein localises to the cell inner membrane. In terms of biological role, f(1)F(0) ATP synthase produces ATP from ADP in the presence of a proton or sodium gradient. F-type ATPases consist of two structural domains, F(1) containing the extramembraneous catalytic core and F(0) containing the membrane proton channel, linked together by a central stalk and a peripheral stalk. During catalysis, ATP synthesis in the catalytic domain of F(1) is coupled via a rotary mechanism of the central stalk subunits to proton translocation. This protein is part of the stalk that links CF(0) to CF(1). It either transmits conformational changes from CF(0) to CF(1) or is implicated in proton conduction. In Sinorhizobium medicae (strain WSM419) (Ensifer medicae), this protein is ATP synthase subunit delta.